We begin with the raw amino-acid sequence, 267 residues long: MDEGGGAGAAAAAAGNAAGAAVHHNARSAEDVFRDFRARRAGIVKALTTDVEKFYRQCDPEKENLCLYGLPNETWDVTLPAEEVPPELPEPALGINFARDGMIEKDWLSLVAVHSDAWLLSVAFYFGARFGFDKEARRRLFTMINGLPTVYEVVTGIAKKQTKVSNGSSKSNKSNPKPSKQSNSNSKPAKPPQPKDEEDSGPEGAEDEDQAYMCGACGETYANGEFWICCDVCEKWFHGKCVRITPAKAEHIKQYKCPGCSSKRSRE.

Residues 162 to 207 (TKVSNGSSKSNKSNPKPSKQSNSNSKPAKPPQPKDEEDSGPEGAED) are disordered. The span at 165 to 188 (SNGSSKSNKSNPKPSKQSNSNSKP) shows a compositional bias: low complexity. Positions 196 to 207 (DEEDSGPEGAED) are enriched in acidic residues. The segment at 211–263 (AYMCGACGETYANGEFWICCDVCEKWFHGKCVRITPAKAEHIKQYKCPGCSSK) adopts a PHD-type zinc-finger fold.

The protein belongs to the Alfin family. Interacts with H3K4me3 and to a lesser extent with H3K4me2.

The protein resides in the nucleus. Histone-binding component that specifically recognizes H3 tails trimethylated on 'Lys-4' (H3K4me3), which mark transcription start sites of virtually all active genes. The polypeptide is PHD finger protein ALFIN-LIKE 7 (Oryza sativa subsp. indica (Rice)).